Reading from the N-terminus, the 335-residue chain is 2-acylglycerol O-acyltransferase 1 (335 aa).

2 helical membrane-spanning segments follow: residues 18-38 and 40-60; these read TVAV…SIGI and VMLI…WLYF. N121 and N125 each carry an N-linked (GlcNAc...) asparagine glycan. Residues 132-152 traverse the membrane as a helical segment; the sequence is LFPGFTSYLHVLPLWFWCPVF. The N-linked (GlcNAc...) asparagine glycan is linked to N180.

It belongs to the diacylglycerol acyltransferase family. In terms of tissue distribution, expressed in stomach and liver.

It is found in the endoplasmic reticulum membrane. The enzyme catalyses a 2-acylglycerol + an acyl-CoA = a 1,2-diacylglycerol + CoA. The catalysed reaction is 2-(9Z-octadecenoyl)-glycerol + butanoyl-CoA = 1-butanoyl-2-(9Z-octadecenoyl)-glycerol + CoA. It catalyses the reaction 2-(9Z-octadecenoyl)-glycerol + octanoyl-CoA = 1-octanoyl-2-(9Z-octadecenoyl)-glycerol + CoA. It carries out the reaction 2-(9Z-octadecenoyl)-glycerol + dodecanoyl-CoA = 1-dodecanoyl-2-(9Z-octadecenoyl)-glycerol + CoA. The enzyme catalyses 2-(9Z-octadecenoyl)-glycerol + tetradecanoyl-CoA = 1-tetradecanoyl-2-(9Z-octadecenoyl)-glycerol + CoA. The catalysed reaction is 2-(9Z-octadecenoyl)-glycerol + hexadecanoyl-CoA = 1-hexadecanoyl-2-(9Z-octadecenoyl)-glycerol + CoA. It catalyses the reaction 2-(9Z-octadecenoyl)-glycerol + octadecanoyl-CoA = 1-octadecanoyl-2-(9Z-octadecenoyl)-glycerol + CoA. It carries out the reaction eicosanoyl-CoA + 2-(9Z-octadecenoyl)-glycerol = 1-eicosanoyl-2-(9Z-octadecenoyl)-glycerol + CoA. The enzyme catalyses 2-(9Z-octadecenoyl)-glycerol + (9Z)-octadecenoyl-CoA = 1,2-di-(9Z-octadecenoyl)-glycerol + CoA. The catalysed reaction is 2-(9Z-octadecenoyl)-glycerol + (9Z,12Z)-octadecadienoyl-CoA = 1-(9Z,12Z-octadecadienoyl)-2-(9Z-octadecenoyl)-glycerol + CoA. It catalyses the reaction 2-(9Z-octadecenoyl)-glycerol + (5Z,8Z,11Z,14Z)-eicosatetraenoyl-CoA = 1-(5Z,8Z,11Z,14Z-eicosatetraenoyl)-2-(9Z-octadecenoyl)-glycerol + CoA. It carries out the reaction a 2-acylglycerol + an acyl-CoA = a 1,2-diacyl-sn-glycerol + CoA. The enzyme catalyses a 2-acylglycerol + an acyl-CoA = a 2,3-diacyl-sn-glycerol + CoA. The catalysed reaction is a 1-acylglycerol + an acyl-CoA = a 1,2-diacylglycerol + CoA. It catalyses the reaction 1-dodecanoylglycerol + (9Z)-octadecenoyl-CoA = 1-dodecanoyl-2-(9Z-octadecenoyl)-glycerol + CoA. It carries out the reaction 1-tetradecanoylglycerol + (9Z)-octadecenoyl-CoA = 1-tetradecanoyl-2-(9Z-octadecenoyl)-glycerol + CoA. The enzyme catalyses 1-hexadecanoylglycerol + (9Z)-octadecenoyl-CoA = 1-hexadecanoyl-2-(9Z-octadecenoyl)-glycerol + CoA. The catalysed reaction is 1-(9Z-octadecenoyl)-glycerol + (9Z)-octadecenoyl-CoA = 1,2-di-(9Z-octadecenoyl)-glycerol + CoA. It catalyses the reaction 1-(9Z,12Z-octadecadienoyl)-glycerol + (9Z)-octadecenoyl-CoA = 1-(9Z,12Z-octadecadienoyl)-2-(9Z-octadecenoyl)-glycerol + CoA. It carries out the reaction 1-(9Z,12Z,15Z-octadecatrienoyl)-glycerol + (9Z)-octadecenoyl-CoA = 1-(9Z,12Z,15Z-octadecatrienoyl)-2-(9Z-octadecenoyl)-glycerol + CoA. The enzyme catalyses 1-(5Z,8Z,11Z,14Z-eicosatetraenoyl)-glycerol + (9Z)-octadecenoyl-CoA = 1-(5Z,8Z,11Z,14Z-eicosatetraenoyl)-2-(9Z-octadecenoyl)-glycerol + CoA. The catalysed reaction is a 1-acylglycerol + an acyl-CoA = a 1,3-diacylglycerol + CoA. It catalyses the reaction 1-dodecanoylglycerol + (9Z)-octadecenoyl-CoA = 1-dodecanoyl-3-(9Z-octadecenoyl)-glycerol + CoA. It carries out the reaction 1-hexadecanoylglycerol + (9Z)-octadecenoyl-CoA = 1-(9Z-octadecenoyl)-3-hexadecanoylglycerol + CoA. The enzyme catalyses 1-octadecanoylglycerol + (9Z)-octadecenoyl-CoA = 1-octadecanoyl-3-(9Z-octadecenoyl)-glycerol + CoA. The catalysed reaction is 1-(9Z-octadecenoyl)-sn-glycerol + (9Z)-octadecenoyl-CoA = 1,3-di-(9Z-octadecenoyl)-glycerol + CoA. It catalyses the reaction 1-(9Z,12Z-octadecadienoyl)-glycerol + (9Z)-octadecenoyl-CoA = 1-(9Z-octadecenoyl)-3-(9Z,12Z-octadecadienoyl)-glycerol + CoA. It carries out the reaction 1-(9Z,12Z,15Z-octadecatrienoyl)-glycerol + (9Z)-octadecenoyl-CoA = 1-(9Z,12Z,15Z-octadecatrienoyl)-3-(9Z-octadecenoyl)-glycerol + CoA. The enzyme catalyses a 1-acyl-sn-glycerol + an acyl-CoA = a 1,3-diacyl-sn-glycerol + CoA. The catalysed reaction is a 3-acyl-sn-glycerol + an acyl-CoA = a 1,3-diacyl-sn-glycerol + CoA. It catalyses the reaction 3-octadecanoyl-sn-glycerol + (9Z)-octadecenoyl-CoA = 1-(9Z-octadecenoyl)-3-octadecanoyl-sn-glycerol + CoA. It functions in the pathway glycerolipid metabolism; triacylglycerol biosynthesis. Functionally, involved in glycerolipid synthesis and lipid metabolism. Catalyzes the formation of diacylglycerol, the precursor of triacylglycerol, by transferring the acyl chain of a fatty acyl-CoA to a monoacylglycerol, mainly at the sn-1 or sn-3 positions. It uses both sn-2-monoacylglycerol (2-acylglycerol) and sn-1-monoacylglycerol (1-acyl-sn-glycerol) equally well as substrates, and uses sn-3-monoacylglycerol (3-acyl-sn-glycerol) with lower efficiency. Probably not involved in absorption of dietary fat in the small intestine. The sequence is that of 2-acylglycerol O-acyltransferase 1 from Homo sapiens (Human).